The chain runs to 83 residues: Cell division topological specificity factor (83 aa).

Belongs to the MinE family.

Prevents the cell division inhibition by proteins MinC and MinD at internal division sites while permitting inhibition at polar sites. This ensures cell division at the proper site by restricting the formation of a division septum at the midpoint of the long axis of the cell. The sequence is that of Cell division topological specificity factor from Acidithiobacillus ferrooxidans (strain ATCC 23270 / DSM 14882 / CIP 104768 / NCIMB 8455) (Ferrobacillus ferrooxidans (strain ATCC 23270)).